The sequence spans 543 residues: Serendipity locus protein alpha (543 aa).

The protein resides in the cytoplasm. The protein localises to the cell membrane. Functionally, required for the cellularization of the syncytial blastoderm embryo. Involved in the localization of the actin filaments just prior to and during plasma membrane invagination. Sry-alpha together with nullo and bnk may provide auxiliary functions, by acting both to stabilize a large and dynamic microfilament structure and regulate its functions. In Drosophila subobscura (Fruit fly), this protein is Serendipity locus protein alpha (Sry-alpha).